A 126-amino-acid polypeptide reads, in one-letter code: Probable DNA-directed RNA polymerase II subunit RPB11 (126 aa).

This sequence belongs to the archaeal Rpo11/eukaryotic RPB11/RPC19 RNA polymerase subunit family. Component of the RNA polymerase II (Pol II) complex consisting of 12 subunits.

Its subcellular location is the nucleus. In terms of biological role, DNA-dependent RNA polymerase catalyzes the transcription of DNA into RNA using the four ribonucleoside triphosphates as substrates. Component of RNA polymerase II which synthesizes mRNA precursors and many functional non-coding RNAs. Pol II is the central component of the basal RNA polymerase II transcription machinery. It is composed of mobile elements that move relative to each other. RPB11 is part of the core element with the central large cleft. The protein is Probable DNA-directed RNA polymerase II subunit RPB11 of Plasmodium chabaudi chabaudi.